We begin with the raw amino-acid sequence, 799 residues long: Ribonucleoside-diphosphate reductase large subunit (799 aa).

Residues Thr-192, 207 to 208 (SC), Gly-238, 408 to 412 (NLCAE), and 612 to 616 (PTAGT) contribute to the substrate site. Cys-208 and Cys-424 are joined by a disulfide. Asn-408 acts as the Proton acceptor in catalysis. Cys-410 acts as the Cysteine radical intermediate in catalysis. Glu-412 functions as the Proton acceptor in the catalytic mechanism. A disordered region spans residues 765–799 (PDSGDGVGGYKGGDEEPRSPEHAQCESPDRCLSCQ). Residues 776-793 (GGDEEPRSPEHAQCESPD) are compositionally biased toward basic and acidic residues.

The protein belongs to the ribonucleoside diphosphate reductase large chain family. As to quaternary structure, heterotetramer composed of a homodimer of the large subunit (R1) and a homodimer of the small subunit (R2). Larger multisubunit protein complex are also active, composed of (R1)n(R2)n.

The catalysed reaction is a 2'-deoxyribonucleoside 5'-diphosphate + [thioredoxin]-disulfide + H2O = a ribonucleoside 5'-diphosphate + [thioredoxin]-dithiol. Functionally, ribonucleoside-diphosphate reductase holoenzyme provides the precursors necessary for viral DNA synthesis. Allows virus growth in non-dividing cells, as well as reactivation from latency in infected hosts. Catalyzes the biosynthesis of deoxyribonucleotides from the corresponding ribonucleotides. In Equine herpesvirus 2 (strain 86/87) (EHV-2), this protein is Ribonucleoside-diphosphate reductase large subunit.